The primary structure comprises 135 residues: RxLR effector protein Avh5 (135 aa).

Residues 1–19 (MRLQFFLVMAVATLATISA) form the signal peptide. A RxLR-dEER motif is present at residues 43-71 (RFLRTADTDIVYEPKVHNPGKKQVFIEDK). 3 residues coordinate a 1,2-diacyl-sn-glycero-3-phospho-(1D-myo-inositol-3-phosphate): lysine 81, lysine 83, and lysine 84.

Belongs to the RxLR effector family.

The protein localises to the secreted. The protein resides in the host cell. Effector that suppresses plant defense responses during the early stages of pathogen infection. Suppresses cell death induced by effectors and PAMPs in plant hosts. The sequence is that of RxLR effector protein Avh5 from Phytophthora sojae (Soybean stem and root rot agent).